A 351-amino-acid chain; its full sequence is Maleylacetate reductase (351 aa).

It belongs to the iron-containing alcohol dehydrogenase family. In terms of assembly, homodimer.

It catalyses the reaction 3-oxoadipate + NAD(+) = maleylacetate + NADH + H(+). The protein operates within aromatic compound metabolism. Its function is as follows. Involved in the gamma-resorcylate (2,6-dihydroxybenzoate) catabolism. Catalyzes the reduction of maleylacetate to 3-oxoadipate. This is Maleylacetate reductase from Rhizobium sp. (strain MTP-10005).